The primary structure comprises 646 residues: Sulfate transporter 3.2 (646 aa).

Residues 1-76 (MSSKRASQYH…GYSLEYLKSD (76 aa)) are Cytoplasmic-facing. The helical transmembrane segment at 77–97 (VISGITIASLAIPQGISYAQL) threads the bilayer. The Extracellular segment spans residues 98 to 99 (AN). Residues 100 to 120 (LPPILGLYSSLVPPLVYAIMG) form a helical membrane-spanning segment. Residues 121–124 (SSRD) are Cytoplasmic-facing. The helical transmembrane segment at 125–145 (LAVGTVAVASLLTAAMLGKEV) threads the bilayer. Over 146-154 (NAVVNPKLY) the chain is Extracellular. Residues 155-175 (LHLAFTATFFAGLMQTCLGLL) form a helical membrane-spanning segment. R176 is a topological domain (cytoplasmic). Residues 177–197 (LGFVVEILSHAAIVGFMGGAA) form a helical membrane-spanning segment. Residues 198–235 (TVVCLQQLKGLLGLHHFTHSTDIVTVLRSIFSQSHMWR) are Extracellular-facing. The helical transmembrane segment at 236 to 256 (WESGVLGCCFLIFLLTTKYIS) threads the bilayer. At 257–262 (KKRPKL) the chain is on the cytoplasmic side. Residues 263–283 (FWISAMSPLVSVIFGTIFLYF) form a helical membrane-spanning segment. Residues 284 to 315 (LHDQFHGIQFIGELKKGINPPSITHLVFTPPY) are Extracellular-facing. The chain crosses the membrane as a helical span at residues 316–336 (VMLALKVGIITGVIALAEGIA). Residues 337–354 (VGRSFAMYKNYNIDGNKE) are Cytoplasmic-facing. The helical transmembrane segment at 355-375 (MIAFGMMNILGSFSSCYLTTG) threads the bilayer. Residues 376–390 (PFSRSAVNYNAGCKT) lie on the Extracellular side of the membrane. 2 helical membrane passes run 391–411 (ALSNVVMAVAVAVTLLFLTPL) and 412–432 (FFYTPLVVLSSIIIAAMLGLV). Residues 433–447 (DYEAAIHLWKLDKFD) are Extracellular-facing. Residues 448 to 468 (FFVCLSAYLGVVFGTIEIGLI) traverse the membrane as a helical segment. Over 469–646 (LSVGISVMRL…DSPVPEFNNV (178 aa)) the chain is Cytoplasmic. Residues 504–627 (HYPQAITRSS…LTVAEAVAAC (124 aa)) enclose the STAS domain.

It belongs to the SLC26A/SulP transporter (TC 2.A.53) family. As to expression, expressed only in leaves.

It is found in the membrane. In terms of biological role, h(+)/sulfate cotransporter that may play a role in the regulation of sulfate assimilation. The sequence is that of Sulfate transporter 3.2 (SULTR3;2) from Arabidopsis thaliana (Mouse-ear cress).